Consider the following 720-residue polypeptide: Chloroplastic group IIA intron splicing facilitator CRS1, chloroplastic (720 aa).

The N-terminal 77 residues, Met-1–Ser-77, are a transit peptide targeting the chloroplast. Residues Lys-131–Glu-159 adopt a coiled-coil conformation. 2 CRM domains span residues Leu-205–Asp-301 and Ala-359–Asp-456. Coiled-coil stretches lie at residues Lys-447–Glu-477 and Arg-517–Leu-553. The CRM 3 domain occupies Glu-570 to Leu-670.

In terms of assembly, homodimer. Interacts with RNA. Part of large ribonucleo-protein complexes that include group IIA introns and CRS1.

The protein resides in the plastid. The protein localises to the chloroplast stroma. Required for the splicing of group IIA introns in chloroplasts, by regulating the intron folding. Forms splicing particles with RNA. May also be involved in chloroplast protein translation. The polypeptide is Chloroplastic group IIA intron splicing facilitator CRS1, chloroplastic (Arabidopsis thaliana (Mouse-ear cress)).